The sequence spans 982 residues: Zinc finger and BTB domain-containing protein 4 (982 aa).

The BTB domain maps to 30-131 (CDVTLIAGDT…IYSARLALPG (102 aa)). Residue K40 forms a Glycyl lysine isopeptide (Lys-Gly) (interchain with G-Cter in SUMO2) linkage. The disordered stretch occupies residues 71–103 (TGGSAPSPATTTAASSSSSSPPPASPHSSSPPR). A compositionally biased stretch (low complexity) spans 74-89 (SAPSPATTTAASSSSS). The interaction with CBFA2T3 stretch occupies residues 165–324 (VPPAPTSMVT…CRYCEKVFAL (160 aa)). A C2H2-type 1; atypical zinc finger spans residues 210–232 (FPCPRCGKSFIHPKRLQTHEAQC). The segment at 234 to 255 (RGSNTRGSAGLGPGVSGSGGPA) is disordered. Residues 242–255 (AGLGPGVSGSGGPA) are compositionally biased toward gly residues. 3 consecutive C2H2-type zinc fingers follow at residues 285 to 307 (YVCA…SNVH), 313 to 335 (YPCR…EVWH), and 341 to 364 (YQCI…RAFH). S367 is subject to Phosphoserine. Positions 404 to 578 (KTYSQGAPEA…QLQAPPPLCQ (175 aa)) are disordered. Pro residues predominate over residues 430–446 (SPQPLPPPAPEPGPPPS). The span at 467 to 477 (AAGGGPAGTGG) shows a compositional bias: gly residues. 2 stretches are compositionally biased toward low complexity: residues 478–488 (SQAASVITYTT) and 507–529 (ATPT…ATAT). K548 participates in a covalent cross-link: Glycyl lysine isopeptide (Lys-Gly) (interchain with G-Cter in SUMO2). The span at 552-565 (GLSGSGGSPTGTGR) shows a compositional bias: gly residues. K590 participates in a covalent cross-link: Glycyl lysine isopeptide (Lys-Gly) (interchain with G-Cter in SUMO2). The span at 591 to 600 (RRISETDLRP) shows a compositional bias: basic and acidic residues. 4 disordered regions span residues 591–700 (RRIS…ERRH), 715–738 (LRKH…SSTR), 759–839 (QRHA…GGGS), and 854–880 (GGSR…GDRM). Positions 604–627 (SGEEVEESEEEEEEEEEEDQEEQE) are enriched in acidic residues. Over residues 628 to 637 (ESKAGGEDQL) the composition is skewed to basic and acidic residues. 2 consecutive C2H2-type zinc fingers follow at residues 700 to 722 (HRCG…QEAH) and 739 to 761 (FTCP…GQRH). Phosphothreonine; by HIPK2 is present on residues T769 and T771. Residues 799 to 820 (SSSSGEAGSGSAAAAEASESAS) show a composition bias toward low complexity. T953 bears the Phosphothreonine; by HIPK2 mark.

Interacts with HIPK2. Interacts with CBFA2T3. Interacts with ZBTB38. In terms of processing, phosphorylated by HIPK2. This phosphorylation reduces stability and triggers ZBTB4 protein degradation in response to DNA damage. Expressed in adult and aged myogenic satellite cells.

It is found in the nucleus. The protein localises to the chromosome. Its function is as follows. Transcriptional repressor with bimodal DNA-binding specificity. Represses transcription in a methyl-CpG-dependent manner. Binds with a higher affinity to methylated CpG dinucleotides in the consensus sequence 5'-CGCG-3' but can also bind to the non-methylated consensus sequence 5'-CTGCNA-3' also known as the consensus kaiso binding site (KBS). Can also bind specifically to a single methyl-CpG pair and can bind hemimethylated DNA but with a lower affinity compared to methylated DNA. Plays a role in postnatal myogenesis, may be involved in the regulation of satellite cells self-renewal. In Mus musculus (Mouse), this protein is Zinc finger and BTB domain-containing protein 4 (Zbtb4).